The sequence spans 468 residues: Neuronal acetylcholine receptor subunit alpha-5 (468 aa).

Positions 1–22 (MATRGSGPRAPRLLLLVQLVAG) are cleaved as a signal peptide. Residues 23-254 (RCGLAGAAGG…VIKRLPLFYT (232 aa)) lie on the Extracellular side of the membrane. Asn155, Asn183, and Asn229 each carry an N-linked (GlcNAc...) asparagine glycan. Cysteines 170 and 184 form a disulfide. Residues Cys234 and Cys235 are joined by a disulfide bond. The next 3 helical transmembrane spans lie at 255 to 275 (LFLI…FYLP), 282 to 302 (ICLC…IEEI), and 317 to 337 (LVFT…AINI). Residues 338–429 (HHRSSSTHNA…WKFIAQVLDR (92 aa)) are Cytoplasmic-facing. A helical membrane pass occupies residues 430-451 (MFLWTFLFVSIVGSLGLFVPVI). Over 452 to 468 (YKWANILIPVHIGNANK) the chain is Extracellular.

The protein belongs to the ligand-gated ion channel (TC 1.A.9) family. Acetylcholine receptor (TC 1.A.9.1) subfamily. Alpha-5/CHRNA5 sub-subfamily. As to quaternary structure, neuronal AChR that forms heteropentamers composed of two different type of subunits: alpha and non-alpha (beta). CHRNA5/alpha-5 subunit is only able to form functional nAChRs when co-assembled with another alpha subunit, can be combined to CHRNA4/alpha-4 or CHRNA3/alpha-3 and CHRNB4/beta-4 or CHRNB2/beta-2 to give rise to functional receptors. Interacts with LYPD6.

The protein resides in the synaptic cell membrane. It localises to the cell membrane. It catalyses the reaction Ca(2+)(in) = Ca(2+)(out). It carries out the reaction K(+)(in) = K(+)(out). The catalysed reaction is Na(+)(in) = Na(+)(out). Activated by a myriad of ligands such as acetylcholine, cytisine, nicotine, choline and epibatidine. Functionally, component of neuronal acetylcholine receptors (nAChRs) that function as pentameric, ligand-gated cation channels with high calcium permeability among other activities. nAChRs are excitatory neurotrasnmitter receptors formed by a collection of nAChR subunits known to mediate synaptic transmission in the nervous system and the neuromuscular junction. Each nAchR subunit confers differential attributes to channel properties, including activation, deactivation and desensitization kinetics, pH sensitivity, cation permeability, and binding to allosteric modulators. Has an accessory rather than functional role and is only able to form functional nAChRs when co-assembled with another beta subunit. Participates in pentameric assemblies along with CHRNA3, CHRNA4, CHRNB2 and CHRNB4. Increases receptor sensitivity to acetylcholine and nicotine when associated with CHRNA4 and CHRNB2. Plays a role in nicotine addiction. This chain is Neuronal acetylcholine receptor subunit alpha-5 (CHRNA5), found in Pan troglodytes (Chimpanzee).